The chain runs to 261 residues: Phosphatidylglycerol--prolipoprotein diacylglyceryl transferase (261 aa).

The next 4 membrane-spanning stretches (helical) occupy residues 17–37 (FGIHWYGLMYLIGFLAFLWLG), 60–80 (ALFYGALGVILGGRLGYALFY), 92–112 (ILFLWQGGMSFHGGFLGVMVA), and 121–141 (GLTFFGIMDFVAPLVPVGLGA). Residue Arg-143 coordinates a 1,2-diacyl-sn-glycero-3-phospho-(1'-sn-glycerol). 3 helical membrane passes run 175–195 (PSQLYEFLLEGVALFILLWWY), 203–223 (GSVSALFLIGYGSFRFLVEFT), and 237–257 (LSMGQWLSLPMVIAGVWLLIV).

This sequence belongs to the Lgt family.

It is found in the cell inner membrane. It catalyses the reaction L-cysteinyl-[prolipoprotein] + a 1,2-diacyl-sn-glycero-3-phospho-(1'-sn-glycerol) = an S-1,2-diacyl-sn-glyceryl-L-cysteinyl-[prolipoprotein] + sn-glycerol 1-phosphate + H(+). It functions in the pathway protein modification; lipoprotein biosynthesis (diacylglyceryl transfer). Functionally, catalyzes the transfer of the diacylglyceryl group from phosphatidylglycerol to the sulfhydryl group of the N-terminal cysteine of a prolipoprotein, the first step in the formation of mature lipoproteins. In Methylobacillus flagellatus (strain ATCC 51484 / DSM 6875 / VKM B-1610 / KT), this protein is Phosphatidylglycerol--prolipoprotein diacylglyceryl transferase.